Consider the following 807-residue polypeptide: MDQGGLKRNCNRDDSLTFGETAVGVGSDTGDTAGSLLQPAAMHLPSPSSLPQLTVAPNGGAGTKDQGEFGGLFESPRGQCEGSEMKEGKIIRLQKRKHHLDIGMFNMEDNLSLLNQNISDLNRTSTSVISTSDTSVLGKLPLPNLFPQHIKQEGGFSLEKELGTYGGHTGGGPCDLDGNSGHLIEDTEIWQDLDLPNSLPEISDFELDSEVAHLDNILHDSSGGCGPDGSLLKETKVLVGNGGNCTDVNGTDQQHPLQHHQHQQQQHRHLLQHQQHQLHHQHQQPPSLLSSVMIKEEKDHDNSFIHIRTPGVVKQEKQENGSFCQSQCLQSSMSSLHGGGPMSSTMGAGAVPGYHYKASPSSTVGLQDQKPFGIFSNLPAVAESWTRGGRFGEPSGIQRGNDGLPSAAMSPFSVSFSSSSPRTGENSSSAVPGLSKPSGPTHKICLVCSDEASGCHYGVVTCGSCKVFFKRAVEGWRARQNTDGQHNYLCAGRNDCIIDKIRRKNCPACRFRKCLQAGMNLEARKNKKLIKMKVHRPTGSAEPISNMPVPVIPRMPQLVPTMLSVLKAIEPEIIYSGYDSTLPDTSTRLMTTLNRLGGQQVISAVKWAKSLPGFRNLHLDDQMTLLQCSWLFLMSFSLGWRSYEQCNGNMLCFAPDLVINKERMKLPFMTDQCEQMLKICNEFVRLQVSYDEYLCMKVLLLLSTVPKDGLKSQAVFDEIRMTYIKELGKAIVKREENASQNWQRFYQLTKLLDSMQEMVEGLLQICFYTFVNKTLSVEFPEMLAEIITNQIPKFKDGSVKPLLFHQK.

Disordered stretches follow at residues 1–47, 246–284, and 412–438; these read MDQG…LPSP, TDVN…QHQQ, and FSVS…SKPS. A modulating region spans residues 1–444; sequence MDQGGLKRNC…SKPSGPTHKI (444 aa). Residues 257–282 show a composition bias toward basic residues; sequence LQHHQHQQQQHRHLLQHQQHQLHHQH. Positions 412–421 are enriched in low complexity; it reads FSVSFSSSSP. 2 consecutive NR C4-type zinc fingers follow at residues 445–465 and 490–514; these read CLVC…CGSC and CAGR…FRKC. A DNA-binding region (nuclear receptor) is located at residues 445-519; it reads CLVCSDEASG…RFRKCLQAGM (75 aa). Residues 520–553 form a hinge region; it reads NLEARKNKKLIKMKVHRPTGSAEPISNMPVPVIP. Positions 554-788 constitute an NR LBD domain; the sequence is RMPQLVPTML…FPEMLAEIIT (235 aa).

This sequence belongs to the nuclear hormone receptor family. NR3 subfamily. In terms of assembly, heteromultimeric cytoplasmic complex with HSP90. Upon ligand binding the complex undergoes a conformation change and moves to the nucleus, where it dissociates. Binds to DNA as a homodimer, and as heterodimer with NR3C2. Interaction with numerous other transcription factors modulates transcription activation.

The protein resides in the cytoplasm. It is found in the nucleus. The protein localises to the mitochondrion. It localises to the cytoskeleton. Its subcellular location is the spindle. The protein resides in the microtubule organizing center. It is found in the centrosome. In terms of biological role, receptor for glucocorticoids (GC). Has a dual mode of action: as a transcription factor that binds to glucocorticoid response elements (GRE), both for nuclear and mitochondrial DNA, and as a modulator of other transcription factors. Affects inflammatory responses, cellular proliferation and differentiation in target tissues. Involved in chromatin remodeling. Plays a role in rapid mRNA degradation by binding to the 5' UTR of target mRNAs and interacting with PNRC2 in a ligand-dependent manner which recruits the RNA helicase UPF1 and the mRNA-decapping enzyme DCP1A, leading to RNA decay. Could act as a coactivator for STAT5-dependent transcription upon growth hormone (GH) stimulation and could reveal an essential role of hepatic GR in the control of body growth. Mediates glucocorticoid-induced apoptosis. Promotes accurate chromosome segregation during mitosis. May act as a tumor suppressor. May play a negative role in adipogenesis through the regulation of lipolytic and antilipogenic gene expression. The sequence is that of Glucocorticoid receptor (nr3c1) from Paralichthys olivaceus (Bastard halibut).